We begin with the raw amino-acid sequence, 264 residues long: NAD kinase 1 (264 aa).

The active-site Proton acceptor is aspartate 45. NAD(+) contacts are provided by residues 45–46 (DG), 122–123 (NE), arginine 148, aspartate 150, 161–166 (TAYNKS), and alanine 185.

This sequence belongs to the NAD kinase family. Requires a divalent metal cation as cofactor.

It is found in the cytoplasm. It catalyses the reaction NAD(+) + ATP = ADP + NADP(+) + H(+). Involved in the regulation of the intracellular balance of NAD and NADP, and is a key enzyme in the biosynthesis of NADP. Catalyzes specifically the phosphorylation on 2'-hydroxyl of the adenosine moiety of NAD to yield NADP. This chain is NAD kinase 1, found in Listeria innocua serovar 6a (strain ATCC BAA-680 / CLIP 11262).